Reading from the N-terminus, the 592-residue chain is Dictomallein-1 (592 aa).

Residues 1–19 form the signal peptide; the sequence is MKILIILLVFLNLITNINC. A Peptidase M66 domain is found at 140-402; sequence PNIGHETNLN…QNYFKDSIIY (263 aa). His294 serves as a coordination point for Zn(2+). Glu295 is a catalytic residue. The Zn(2+) site is built by His298 and His304.

The protein belongs to the dictomallein family. The cofactor is Zn(2+).

It is found in the secreted. In Dictyostelium discoideum (Social amoeba), this protein is Dictomallein-1 (dtmlA).